The primary structure comprises 409 residues: Glycosyltransferase GtfC (409 aa).

Belongs to the glycosyltransferase 28 family.

The catalysed reaction is dTDP-beta-L-vancosamine + devancoaminyl-vancomycin = epivancomycin + dTDP + H(+). It carries out the reaction chloroorienticin B + dTDP-beta-L-vancosamine = chloroeremomycin + dTDP + H(+). It functions in the pathway antibiotic biosynthesis; vancomycin biosynthesis. Its function is as follows. Catalyzes the attachment of dTDP-L-4-epi-vancosamine to chloroorienticin B to form chloroeremomycin in the biosynthesis of glycopeptide antibiotic chloroeremomycin, a member of the vancomycin group of antibiotics. Also able to use dTDP-L-4-epi-vancosamine and devancoaminyl-vancomycin (DVV) to create epivancomycin. Acts downstream of GtfA. The chain is Glycosyltransferase GtfC (gtfC) from Amycolatopsis orientalis (Nocardia orientalis).